The chain runs to 225 residues: MMYHIPGVLSPQDVARFREQLGQAEWVDGRVTTGAQGAQVKNNQQVDTRSTLYAALQNEVLNAVNQHALFFAAALPRTLSTPLFNRYQNNETYGFHVDGAVRSHPQNGWMRTDLSATLFLSDPESYDGGELVVNDTFGQHRVKLPAGDLVLYPSSSLHCVTPVTRGVRVASFMWIQSMIRDDKKRAMLFELDKNIQSLKSRYGESEEILSLLNLYHNLLREWSEI.

A Fe2OG dioxygenase domain is found at 78 to 177 (TLSTPLFNRY…RVASFMWIQS (100 aa)). Fe cation contacts are provided by H96, D98, and H158. R168 serves as a coordination point for 2-oxoglutarate.

Fe(2+) is required as a cofactor. It depends on L-ascorbate as a cofactor.

The protein is PKHD-type hydroxylase YbiX of Shigella dysenteriae serotype 1 (strain Sd197).